Consider the following 246-residue polypeptide: Probable S-methyl-5'-thioinosine phosphorylase (246 aa).

Residues threonine 10 and arginine 52–histidine 53 contribute to the phosphate site. Methionine 185 contributes to the substrate binding site. Residue threonine 186 coordinates phosphate. Substrate is bound at residue asparagine 209–alanine 211.

The protein belongs to the PNP/MTAP phosphorylase family. MTAP subfamily. Homotrimer.

The catalysed reaction is S-methyl-5'-thioinosine + phosphate = 5-(methylsulfanyl)-alpha-D-ribose 1-phosphate + hypoxanthine. The protein operates within purine metabolism; purine nucleoside salvage. In terms of biological role, catalyzes the reversible phosphorylation of S-methyl-5'-thioinosine (MTI) to hypoxanthine and 5-methylthioribose-1-phosphate. Involved in the breakdown of S-methyl-5'-thioadenosine (MTA), a major by-product of polyamine biosynthesis. Catabolism of (MTA) occurs via deamination to MTI and phosphorolysis to hypoxanthine. This Pseudomonas syringae pv. tomato (strain ATCC BAA-871 / DC3000) protein is Probable S-methyl-5'-thioinosine phosphorylase.